The following is a 769-amino-acid chain: Probable beta-glucosidase M (769 aa).

The N-terminal stretch at 1-22 is a signal peptide; it reads MHSNVGLAGLAGLLATASVCLS. Residues Asn28, Asn75, and Asn262 are each glycosylated (N-linked (GlcNAc...) asparagine). Asp290 is a catalytic residue. Residues Asn318, Asn325, Asn396, Asn437, Asn510, Asn546, and Asn625 are each glycosylated (N-linked (GlcNAc...) asparagine).

It belongs to the glycosyl hydrolase 3 family.

Its subcellular location is the secreted. The catalysed reaction is Hydrolysis of terminal, non-reducing beta-D-glucosyl residues with release of beta-D-glucose.. It functions in the pathway glycan metabolism; cellulose degradation. In terms of biological role, beta-glucosidases are one of a number of cellulolytic enzymes involved in the degradation of cellulosic biomass. Catalyzes the last step releasing glucose from the inhibitory cellobiose. This is Probable beta-glucosidase M (bglM) from Aspergillus fumigatus (strain CBS 144.89 / FGSC A1163 / CEA10) (Neosartorya fumigata).